Here is a 252-residue protein sequence, read N- to C-terminus: Ribosomal RNA small subunit methyltransferase A (252 aa).

Residues asparagine 11, leucine 13, glycine 38, glutamate 60, aspartate 82, and asparagine 99 each coordinate S-adenosyl-L-methionine.

This sequence belongs to the class I-like SAM-binding methyltransferase superfamily. rRNA adenine N(6)-methyltransferase family. RsmA subfamily.

It is found in the cytoplasm. The enzyme catalyses adenosine(1518)/adenosine(1519) in 16S rRNA + 4 S-adenosyl-L-methionine = N(6)-dimethyladenosine(1518)/N(6)-dimethyladenosine(1519) in 16S rRNA + 4 S-adenosyl-L-homocysteine + 4 H(+). In terms of biological role, specifically dimethylates two adjacent adenosines (A1518 and A1519) in the loop of a conserved hairpin near the 3'-end of 16S rRNA in the 30S particle. May play a critical role in biogenesis of 30S subunits. This is Ribosomal RNA small subunit methyltransferase A from Hydrogenobaculum sp. (strain Y04AAS1).